The sequence spans 494 residues: Cytochrome P450 2A4 (494 aa).

A Phosphoserine modification is found at Ser131. Lys379 carries the post-translational modification N6-acetyllysine. Cys439 contacts heme.

The protein belongs to the cytochrome P450 family. It depends on heme as a cofactor. In terms of tissue distribution, kidney and lung. Expressed in liver, with a strong circadian rhythmicity. Circadian expression is regulated by DBP.

The protein localises to the endoplasmic reticulum membrane. It is found in the microsome membrane. The enzyme catalyses an organic molecule + reduced [NADPH--hemoprotein reductase] + O2 = an alcohol + oxidized [NADPH--hemoprotein reductase] + H2O + H(+). In terms of biological role, highly active in the 15-alpha-hydroxylation of testosterone. Also active in the 15-alpha-hydroxylation of progesterone and androstenedione. Little or no activity on corticosterone, pregnenolone, dehydroepiandrosterone, estradiol or estriol. In Mus musculus (Mouse), this protein is Cytochrome P450 2A4 (Cyp2a4).